The sequence spans 331 residues: Ketol-acid reductoisomerase (NADP(+)) (331 aa).

The KARI N-terminal Rossmann domain maps to 2-182; the sequence is ARLYYDADAN…GGTRAGILET (181 aa). NADP(+) is bound by residues 25-28, S51, S53, and 83-86; these read YGSQ and DEVQ. H108 is a catalytic residue. Position 134 (G134) interacts with NADP(+). Positions 183-328 constitute a KARI C-terminal knotted domain; that stretch reads TFREETETDL…KDLRAMFSWT (146 aa). Positions 191, 195, 227, and 231 each coordinate Mg(2+). Residue S252 coordinates substrate.

This sequence belongs to the ketol-acid reductoisomerase family. Mg(2+) serves as cofactor.

The enzyme catalyses (2R)-2,3-dihydroxy-3-methylbutanoate + NADP(+) = (2S)-2-acetolactate + NADPH + H(+). It carries out the reaction (2R,3R)-2,3-dihydroxy-3-methylpentanoate + NADP(+) = (S)-2-ethyl-2-hydroxy-3-oxobutanoate + NADPH + H(+). It participates in amino-acid biosynthesis; L-isoleucine biosynthesis; L-isoleucine from 2-oxobutanoate: step 2/4. Its pathway is amino-acid biosynthesis; L-valine biosynthesis; L-valine from pyruvate: step 2/4. In terms of biological role, involved in the biosynthesis of branched-chain amino acids (BCAA). Catalyzes an alkyl-migration followed by a ketol-acid reduction of (S)-2-acetolactate (S2AL) to yield (R)-2,3-dihydroxy-isovalerate. In the isomerase reaction, S2AL is rearranged via a Mg-dependent methyl migration to produce 3-hydroxy-3-methyl-2-ketobutyrate (HMKB). In the reductase reaction, this 2-ketoacid undergoes a metal-dependent reduction by NADPH to yield (R)-2,3-dihydroxy-isovalerate. The chain is Ketol-acid reductoisomerase (NADP(+)) from Acaryochloris marina (strain MBIC 11017).